The chain runs to 261 residues: Cytochrome c oxidase subunit 3 (261 aa).

Over 1–15 the chain is Mitochondrial matrix; that stretch reads MTHQTHAYHMVNPSP. The helical transmembrane segment at 16–34 threads the bilayer; sequence WPLTGALSALLMTSGLIMW. Topologically, residues 35-40 are mitochondrial intermembrane; sequence FHFNST. The chain crosses the membrane as a helical span at residues 41-66; sequence TLLMLGLTTNMLTMYQWWRDVVREST. Over 67–72 the chain is Mitochondrial matrix; sequence FQGHHT. The helical transmembrane segment at 73–105 threads the bilayer; it reads PNVQKGLRYGMILFIISEVLFFTGFFWAFYHSS. Residues 106–128 are Mitochondrial intermembrane-facing; that stretch reads LAPTPELGGCWPPTGIHPLNPLE. A helical transmembrane segment spans residues 129–152; sequence VPLLNTSVLLASGVSITWAHHSLM. The Mitochondrial matrix portion of the chain corresponds to 153–155; that stretch reads EGN. A helical transmembrane segment spans residues 156–183; sequence RNHMLQALFITIALGVYFTLLQASEYYE. The Mitochondrial intermembrane segment spans residues 184-190; the sequence is APFTISD. Residues 191–223 traverse the membrane as a helical segment; it reads GVYGSTFFVATGFHGLHVIIGSTFLIVCFFRQL. The Mitochondrial matrix segment spans residues 224 to 232; sequence KFHFTSSHH. The chain crosses the membrane as a helical span at residues 233–256; it reads FGFEAAAWYWHFVDVVWLFLYVSI. At 257–261 the chain is on the mitochondrial intermembrane side; that stretch reads YWWGS.

Belongs to the cytochrome c oxidase subunit 3 family. Component of the cytochrome c oxidase (complex IV, CIV), a multisubunit enzyme composed of 14 subunits. The complex is composed of a catalytic core of 3 subunits MT-CO1, MT-CO2 and MT-CO3, encoded in the mitochondrial DNA, and 11 supernumerary subunits COX4I, COX5A, COX5B, COX6A, COX6B, COX6C, COX7A, COX7B, COX7C, COX8 and NDUFA4, which are encoded in the nuclear genome. The complex exists as a monomer or a dimer and forms supercomplexes (SCs) in the inner mitochondrial membrane with NADH-ubiquinone oxidoreductase (complex I, CI) and ubiquinol-cytochrome c oxidoreductase (cytochrome b-c1 complex, complex III, CIII), resulting in different assemblies (supercomplex SCI(1)III(2)IV(1) and megacomplex MCI(2)III(2)IV(2)).

The protein localises to the mitochondrion inner membrane. It carries out the reaction 4 Fe(II)-[cytochrome c] + O2 + 8 H(+)(in) = 4 Fe(III)-[cytochrome c] + 2 H2O + 4 H(+)(out). Component of the cytochrome c oxidase, the last enzyme in the mitochondrial electron transport chain which drives oxidative phosphorylation. The respiratory chain contains 3 multisubunit complexes succinate dehydrogenase (complex II, CII), ubiquinol-cytochrome c oxidoreductase (cytochrome b-c1 complex, complex III, CIII) and cytochrome c oxidase (complex IV, CIV), that cooperate to transfer electrons derived from NADH and succinate to molecular oxygen, creating an electrochemical gradient over the inner membrane that drives transmembrane transport and the ATP synthase. Cytochrome c oxidase is the component of the respiratory chain that catalyzes the reduction of oxygen to water. Electrons originating from reduced cytochrome c in the intermembrane space (IMS) are transferred via the dinuclear copper A center (CU(A)) of subunit 2 and heme A of subunit 1 to the active site in subunit 1, a binuclear center (BNC) formed by heme A3 and copper B (CU(B)). The BNC reduces molecular oxygen to 2 water molecules using 4 electrons from cytochrome c in the IMS and 4 protons from the mitochondrial matrix. The chain is Cytochrome c oxidase subunit 3 (MT-CO3) from Gazella spekei (Speke's gazelle).